A 257-amino-acid polypeptide reads, in one-letter code: Ubiquinone biosynthesis O-methyltransferase (257 aa).

4 residues coordinate S-adenosyl-L-methionine: Arg43, Gly77, Asp98, and Met144.

The protein belongs to the methyltransferase superfamily. UbiG/COQ3 family.

The enzyme catalyses a 3-demethylubiquinol + S-adenosyl-L-methionine = a ubiquinol + S-adenosyl-L-homocysteine + H(+). It carries out the reaction a 3-(all-trans-polyprenyl)benzene-1,2-diol + S-adenosyl-L-methionine = a 2-methoxy-6-(all-trans-polyprenyl)phenol + S-adenosyl-L-homocysteine + H(+). It functions in the pathway cofactor biosynthesis; ubiquinone biosynthesis. Functionally, O-methyltransferase that catalyzes the 2 O-methylation steps in the ubiquinone biosynthetic pathway. The chain is Ubiquinone biosynthesis O-methyltransferase from Psychrobacter arcticus (strain DSM 17307 / VKM B-2377 / 273-4).